Reading from the N-terminus, the 146-residue chain is Myoglobin (146 aa).

A Globin domain is found at 2–141; that stretch reads GDFDMVLKFW…IIADIDATYK (140 aa). Position 60 (His-60) interacts with nitrite. Residue His-60 participates in O2 binding. A heme b-binding site is contributed by His-89.

Belongs to the globin family. Monomeric.

The protein resides in the cytoplasm. The protein localises to the sarcoplasm. It catalyses the reaction Fe(III)-heme b-[protein] + nitric oxide + H2O = Fe(II)-heme b-[protein] + nitrite + 2 H(+). The enzyme catalyses H2O2 + AH2 = A + 2 H2O. In terms of biological role, monomeric heme protein which primary function is to store oxygen and facilitate its diffusion within muscle tissues. Reversibly binds oxygen through a pentacoordinated heme iron and enables its timely and efficient release as needed during periods of heightened demand. Depending on the oxidative conditions of tissues and cells, and in addition to its ability to bind oxygen, it also has a nitrite reductase activity whereby it regulates the production of bioactive nitric oxide. Under stress conditions, like hypoxia and anoxia, it also protects cells against reactive oxygen species thanks to its pseudoperoxidase activity. This Tetraodon nigroviridis (Spotted green pufferfish) protein is Myoglobin (mb).